The primary structure comprises 78 residues: Consomatin Nc1 (78 aa).

The signal sequence occupies residues 1–22 (MQTAYWVMVMVMVWITAPLSEG). The propeptide occupies 23-59 (GKPNDVIRGLVPDDLTPQLILRSLISRRRSDKDVGKR). Glutamate 61 is modified (4-carboxyglutamate). The cysteines at positions 62 and 67 are disulfide-linked. The residue at position 64 (tryptophan 64) is a D-tryptophan. The residue at position 70 (proline 70) is a 4-hydroxyproline. Residues 71-78 (LSRRHDLG) constitute a propeptide that is removed on maturation.

This sequence belongs to the conotoxin C superfamily. Consomatin family. Expressed by the venom duct.

It localises to the secreted. Its function is as follows. Moderately activates human somatostatin receptors (SSTR) with a preferential activation of SSTR1 and SSTR4. In vivo, does not cause behavioral changes in mice within a few minutes of intracranial injection, but causes a progressive loss of movement thereafter. Four to five hours after injection, mice recover, even with the highest dose tested. Shows antinociception and antihyperalgesia activities in two mouse models of acute pain, most probably by acting outside the central nervous system. The protein is Consomatin Nc1 of Conus neocostatus (Cone snail).